A 321-amino-acid chain; its full sequence is Transcription factor ATOH8 (321 aa).

2 disordered regions span residues 59 to 193 and 203 to 222; these read GLRD…SSYS and HQDSSASPRKRPGEATAASS. The span at 70 to 85 shows a compositional bias: pro residues; sequence VPVPVPVPVPVAPAVP. Residues 93–109 show a composition bias toward basic and acidic residues; the sequence is AGERGGSRAPEVSDARK. A compositionally biased stretch (pro residues) spans 121-132; it reads LPTPPPPPPPAP. Residues 133 to 143 show a composition bias toward low complexity; that stretch reads QSQAPGGPEAQ. Positions 160 to 186 are enriched in pro residues; that stretch reads PARPAPSAPPAPPAPPESTVRPAPPTR. Positions 230–243 are basic motif; degenerate; the sequence is TRRLLANARERTRV. The bHLH domain maps to 230–282; that stretch reads TRRLLANARERTRVHTISAAFEALRKQVPCYSYGQKLSKLAILRIACNYILSL. The segment at 244-282 is helix-loop-helix motif; sequence HTISAAFEALRKQVPCYSYGQKLSKLAILRIACNYILSL.

As to quaternary structure, efficient DNA binding requires dimerization with another bHLH protein. Interacts with NEUROG3 and NEUROD1. Interacts with ZFPM2; mediates indirect interaction with GATA4. Forms a heterodimer with TCF3; repress transcription of TCF3 and TCF3/NEUROG3 dimer-induced transactivation of E box-dependent promoters. In terms of tissue distribution, expressed in lung, liver, kidney, heart and pancreas. Expressed in endothel of umbilical vessels.

The protein resides in the nucleus. Its subcellular location is the nucleus speckle. The protein localises to the cytoplasm. Transcription factor that binds a palindromic (canonical) core consensus DNA sequence 5'-CANNTG- 3' known as an E-box element, possibly as a heterodimer with other bHLH proteins. Regulates endothelial cell proliferation, migration and tube-like structures formation. Modulates endothelial cell differentiation through NOS3. May be implicated in specification and differentiation of neuronal cell lineages in the brain. May participate in kidney development and may be involved in podocyte differentiation. During early embryonic development is involved in tissue-specific differentiation processes that are dependent on class II bHLH factors and namely modulates the differentiation program initiated by the pro-endocrine factor NEUROG3. During myogenesis, may play a role during the transition of myoblasts from the proliferative phase to the differentiation phase. Positively regulates HAMP transcription in two ways, firstly by acting directly on the HAMP promoter via E-boxes binding and indirectly through increased phosphorylation of SMAD protein complex. Repress NEUROG3-dependent gene activation in a gene-specific manner through at least two mechanisms; requires only either the sequestering of a general partner such as TCF3 through heterodimerization, either also requires binding of the bHLH domain to DNA via a basic motif. The protein is Transcription factor ATOH8 of Homo sapiens (Human).